Reading from the N-terminus, the 426-residue chain is Probable histidine--tRNA ligase (426 aa).

It belongs to the class-II aminoacyl-tRNA synthetase family. In terms of assembly, homodimer.

It localises to the cytoplasm. It catalyses the reaction tRNA(His) + L-histidine + ATP = L-histidyl-tRNA(His) + AMP + diphosphate + H(+). This Tropheryma whipplei (strain TW08/27) (Whipple's bacillus) protein is Probable histidine--tRNA ligase (hisS).